The chain runs to 205 residues: Protein Nef (205 aa).

G2 carries N-myristoyl glycine; by host lipidation. At S6 the chain carries Phosphoserine; by host. Residues 62–65 (EEEE) are acidic; interacts with host PACS1 and PACS2; stabilizes the interaction of NEF/MHC-I with host AP1M1; necessary for MHC-I internalization. The interval 69 to 78 (PVTPQVPLRP) is SH3-binding; interaction with Src family tyrosine kinases. A PxxP; stabilizes the interaction of NEF/MHC-I with host AP1M1; necessary for MHC-I internalization motif is present at residues 72–75 (PQVP). The interval 108 to 124 (DILDLWIHHTQGYFPDW) is mediates dimerization, Nef-PTE1 interaction. The binding to ATP6V1H stretch occupies residues 148–179 (VEPEKEEANKGENTSLLHPVSLHGMDDPEREV). The short motif at 163 to 164 (LL) is the Dileucine internalization motif; necessary for CD4 internalization element. A Diacidic; necessary for CD4 internalization motif is present at residues 173 to 174 (DD).

Belongs to the lentivirus primate group Nef protein family. As to quaternary structure, monomer; cytosolic form. Homodimer; membrane bound form. Interacts with Nef associated p21-activated kinase (PAK2); this interaction activates PAK2. Associates with the Nef-MHC-I-AP1 complex; this complex is required for MHC-I internalization. Interacts (via C-terminus) with host PI3-kinase. Interacts with host PACS1; this interaction seems to be weak. Interacts with host PACS2. Interacts with host LCK and MAPK3; these interactions inhibit the kinase activity of the latter. Interacts with host ATP6V1H; this interaction may play a role in CD4 endocytosis. Associates with the CD4-Nef-AP2 complex; this complex is required for CD4 internalization. Interacts with host AP2 subunit alpha and AP2 subunit sigma2. Interacts with TCR-zeta chain; this interaction up-regulates the Fas ligand (FasL) surface expression. Interacts with host HCK, LYN, and SRC; these interactions activate the Src family kinases. Interacts with MAP3K5; this interaction inhibits the Fas and TNFR-mediated death signals. Interacts with beta-COP and PTE1. Interacts with human RACK1; this increases Nef phosphorylation by PKC. Interacts with TP53; this interaction decreases the half-life of TP53, protecting the infected cell against p53-mediated apoptosis. Post-translationally, the virion-associated Nef proteins are cleaved by the viral protease to release the soluble C-terminal core protein. Nef is probably cleaved concomitantly with viral structural proteins on maturation of virus particles. Myristoylated. In terms of processing, phosphorylated on serine residues, probably by host PKCdelta and theta.

It localises to the host cell membrane. The protein localises to the virion. Its subcellular location is the secreted. The protein resides in the host Golgi apparatus membrane. Its function is as follows. Factor of infectivity and pathogenicity, required for optimal virus replication. Alters numerous pathways of T-lymphocyte function and down-regulates immunity surface molecules in order to evade host defense and increase viral infectivity. Alters the functionality of other immunity cells, like dendritic cells, monocytes/macrophages and NK cells. In terms of biological role, in infected CD4(+) T-lymphocytes, down-regulates the surface MHC-I, mature MHC-II, CD4, CD28, CCR5 and CXCR4 molecules. Mediates internalization and degradation of host CD4 through the interaction of with the cytoplasmic tail of CD4, the recruitment of AP-2 (clathrin adapter protein complex 2), internalization through clathrin coated pits, and subsequent transport to endosomes and lysosomes for degradation. Diverts host MHC-I molecules to the trans-Golgi network-associated endosomal compartments by an endocytic pathway to finally target them for degradation. MHC-I down-regulation may involve AP-1 (clathrin adapter protein complex 1) or possibly Src family kinase-ZAP70/Syk-PI3K cascade recruited by PACS2. In consequence infected cells are masked for immune recognition by cytotoxic T-lymphocytes. Decreasing the number of immune receptors also prevents reinfection by more HIV particles (superinfection). Down-regulates host SERINC3 and SERINC5 thereby excluding these proteins from the viral particles. Virion infectivity is drastically higher when SERINC3 or SERINC5 are excluded from the viral envelope, because these host antiviral proteins impair the membrane fusion event necessary for subsequent virion penetration. Bypasses host T-cell signaling by inducing a transcriptional program nearly identical to that of anti-CD3 cell activation. Interaction with TCR-zeta chain up-regulates the Fas ligand (FasL). Increasing surface FasL molecules and decreasing surface MHC-I molecules on infected CD4(+) cells send attacking cytotoxic CD8+ T-lymphocytes into apoptosis. Functionally, plays a role in optimizing the host cell environment for viral replication without causing cell death by apoptosis. Protects the infected cells from apoptosis in order to keep them alive until the next virus generation is ready to strike. Inhibits the Fas and TNFR-mediated death signals by blocking MAP3K5/ASK1. Decreases the half-life of TP53, protecting the infected cell against p53-mediated apoptosis. Inhibits the apoptotic signals regulated by the Bcl-2 family proteins through the formation of a Nef/PI3-kinase/PAK2 complex that leads to activation of PAK2 and induces phosphorylation of host BAD. Its function is as follows. Extracellular Nef protein targets CD4(+) T-lymphocytes for apoptosis by interacting with CXCR4 surface receptors. The polypeptide is Protein Nef (Homo sapiens (Human)).